Consider the following 296-residue polypeptide: GTPase Era (296 aa).

An Era-type G domain is found at 2–171; it reads KAGFIAVVGR…LEALDPYLED (170 aa). The segment at 10–17 is G1; that stretch reads GRPNVGKS. 10 to 17 contacts GTP; sequence GRPNVGKS. Positions 36–40 are G2; sequence GTTRD. A G3 region spans residues 57 to 60; that stretch reads DTPG. GTP is bound by residues 57 to 61 and 120 to 123; these read DTPGI and NKVD. Positions 120 to 123 are G4; that stretch reads NKVD. The G5 stretch occupies residues 150–152; it reads ASG. The region spanning 202-279 is the KH type-2 domain; that stretch reads TRDEIPHSVA…YLGLWVKVKD (78 aa).

This sequence belongs to the TRAFAC class TrmE-Era-EngA-EngB-Septin-like GTPase superfamily. Era GTPase family. In terms of assembly, monomer.

Its subcellular location is the cytoplasm. It localises to the cell inner membrane. An essential GTPase that binds both GDP and GTP, with rapid nucleotide exchange. Plays a role in 16S rRNA processing and 30S ribosomal subunit biogenesis and possibly also in cell cycle regulation and energy metabolism. The protein is GTPase Era of Fusobacterium nucleatum subsp. nucleatum (strain ATCC 25586 / DSM 15643 / BCRC 10681 / CIP 101130 / JCM 8532 / KCTC 2640 / LMG 13131 / VPI 4355).